The following is a 681-amino-acid chain: DNA ligase (681 aa).

NAD(+) contacts are provided by residues 45–49 (DFDFD), 94–95 (SL), and Glu-120. Lys-122 serves as the catalytic N6-AMP-lysine intermediate. Positions 143, 177, 289, and 313 each coordinate NAD(+). Zn(2+) is bound by residues Cys-403, Cys-406, Cys-421, and Cys-426. A BRCT domain is found at 593–681 (SDQQPFAGQS…SLKINFKNTI (89 aa)).

This sequence belongs to the NAD-dependent DNA ligase family. LigA subfamily. It depends on Mg(2+) as a cofactor. Mn(2+) is required as a cofactor.

The enzyme catalyses NAD(+) + (deoxyribonucleotide)n-3'-hydroxyl + 5'-phospho-(deoxyribonucleotide)m = (deoxyribonucleotide)n+m + AMP + beta-nicotinamide D-nucleotide.. In terms of biological role, DNA ligase that catalyzes the formation of phosphodiester linkages between 5'-phosphoryl and 3'-hydroxyl groups in double-stranded DNA using NAD as a coenzyme and as the energy source for the reaction. It is essential for DNA replication and repair of damaged DNA. The protein is DNA ligase of Leptospira borgpetersenii serovar Hardjo-bovis (strain L550).